The following is a 54-amino-acid chain: Protein hunchback (54 aa).

3 C2H2-type zinc fingers span residues 1–3 (RKH), 9–31 (FQCD…RKFH), and 37–54 (YRCA…SFKL).

It belongs to the hunchback C2H2-type zinc-finger protein family.

Its subcellular location is the nucleus. In terms of biological role, gap class segmentation protein that controls development of head structures. This is Protein hunchback (hb) from Calliphora vicina (Blue blowfly).